A 376-amino-acid polypeptide reads, in one-letter code: Glutamate 5-kinase (376 aa).

Lysine 18 is a binding site for ATP. Positions 58, 145, and 157 each coordinate substrate. ATP is bound by residues 177-178 (SD) and 218-224 (TGGMASK). Positions 280–358 (TGALTLDAGA…SELPGELRRP (79 aa)) constitute a PUA domain.

It belongs to the glutamate 5-kinase family.

The protein localises to the cytoplasm. It carries out the reaction L-glutamate + ATP = L-glutamyl 5-phosphate + ADP. The protein operates within amino-acid biosynthesis; L-proline biosynthesis; L-glutamate 5-semialdehyde from L-glutamate: step 1/2. In terms of biological role, catalyzes the transfer of a phosphate group to glutamate to form L-glutamate 5-phosphate. In Mycobacterium tuberculosis (strain ATCC 25177 / H37Ra), this protein is Glutamate 5-kinase.